The sequence spans 450 residues: Tubulin beta-3 chain (450 aa).

The MREI motif signature appears at 1 to 4 (MREI). GDP contacts are provided by Gly-10, Gln-11, Cys-12, and Gln-15. Residue Gln-11 coordinates GTP. GTP is bound at residue Glu-69. Glu-69 provides a ligand contact to Mg(2+). Asn-99, Ser-138, Gly-142, Thr-143, and Gly-144 together coordinate GDP. The GTP site is built by Ser-138, Gly-142, Thr-143, and Gly-144. Ser-172 bears the Phosphoserine; by CDK1 mark. Residues Asp-177, Asn-204, Tyr-222, and Asn-226 each contribute to the GDP site. Residue Asn-204 participates in GTP binding. Asn-226 lines the GTP pocket. Residues 425–450 (YQDATAEEEGEMYEDDEEESEAQGPK) are disordered. Residues 429-450 (TAEEEGEMYEDDEEESEAQGPK) show a composition bias toward acidic residues. 5-glutamyl polyglutamate is present on Glu-438. At Ser-444 the chain carries Phosphoserine.

This sequence belongs to the tubulin family. As to quaternary structure, heterodimer of alpha- and beta-tubulin. A typical microtubule is a hollow water-filled tube with an outer diameter of 25 nm and an inner diameter of 15 nM. Alpha-beta heterodimers associate head-to-tail to form protofilaments running lengthwise along the microtubule wall with the beta-tubulin subunit facing the microtubule plus end conferring a structural polarity. Microtubules usually have 13 protofilaments but different protofilament numbers can be found in some organisms and specialized cells. Interacts with gamma-tubulin; the interaction allows microtubules to nucleate from the gamma-tubulin ring complex (gTuRC). Interacts with UNC5C (via cytoplasmic domain); this interaction is decreased by NTN1/Netrin-1. Interacts with NLRP5/MATER at cytoskeleton microtubules. Interacts with DPYSL5. Interacts with CFAP61. Mg(2+) is required as a cofactor. Some glutamate residues at the C-terminus are polyglutamylated, resulting in polyglutamate chains on the gamma-carboxyl group. Polyglutamylation plays a key role in microtubule severing by spastin (SPAST). SPAST preferentially recognizes and acts on microtubules decorated with short polyglutamate tails: severing activity by SPAST increases as the number of glutamates per tubulin rises from one to eight, but decreases beyond this glutamylation threshold. Glutamylation is also involved in cilia motility. Post-translationally, some glutamate residues at the C-terminus are monoglycylated but not polyglycylated due to the absence of functional TTLL10 in human. Monoglycylation is mainly limited to tubulin incorporated into cilia and flagella axonemes, which is required for their stability and maintenance. Flagella glycylation controls sperm motility. Both polyglutamylation and monoglycylation can coexist on the same protein on adjacent residues, and lowering glycylation levels increases polyglutamylation, and reciprocally. In terms of processing, phosphorylated on Ser-172 by CDK1 during the cell cycle, from metaphase to telophase, but not in interphase. This phosphorylation inhibits tubulin incorporation into microtubules. Expression is primarily restricted to central and peripheral nervous system. Greatly increased expression in most cancerous tissues.

It localises to the cytoplasm. The protein localises to the cytoskeleton. Its subcellular location is the cell projection. The protein resides in the growth cone. It is found in the lamellipodium. It localises to the filopodium. Tubulin is the major constituent of microtubules, protein filaments consisting of alpha- and beta-tubulin heterodimers. Microtubules grow by the addition of GTP-tubulin dimers to the microtubule end, where a stabilizing cap forms. Below the cap, alpha-beta tubulin heterodimers are in GDP-bound state, owing to GTPase activity of alpha-tubulin. TUBB3 plays a critical role in proper axon guidance and maintenance. Binding of NTN1/Netrin-1 to its receptor UNC5C might cause dissociation of UNC5C from polymerized TUBB3 in microtubules and thereby lead to increased microtubule dynamics and axon repulsion. Plays a role in dorsal root ganglion axon projection towards the spinal cord. This Homo sapiens (Human) protein is Tubulin beta-3 chain (TUBB3).